The primary structure comprises 114 residues: Flagellar transcriptional regulator FlhD (114 aa).

The protein belongs to the FlhD family. Homodimer; disulfide-linked. Forms a heterohexamer composed of two FlhC and four FlhD subunits. Each FlhC binds a FlhD dimer, forming a heterotrimer, and a hexamer assembles by dimerization of two heterotrimers.

Its subcellular location is the cytoplasm. Functionally, functions in complex with FlhC as a master transcriptional regulator that regulates transcription of several flagellar and non-flagellar operons by binding to their promoter region. Activates expression of class 2 flagellar genes, including fliA, which is a flagellum-specific sigma factor that turns on the class 3 genes. Also regulates genes whose products function in a variety of physiological pathways. This Wigglesworthia glossinidia brevipalpis protein is Flagellar transcriptional regulator FlhD.